The following is a 414-amino-acid chain: 26S proteasome regulatory subunit 6B homolog (414 aa).

The interval 1-33 (MAATMVLDPKPSSTPPPTLPNPYTTDSQSTDSE) is disordered. Low complexity predominate over residues 21 to 30 (NPYTTDSQST). Residues 55-81 (EYVKDELKNLKREQLRSQEEVKRIQSV) are a coiled coil. 202 to 209 (GPPGTGKT) contacts ATP.

This sequence belongs to the AAA ATPase family.

It localises to the cytoplasm. The protein localises to the nucleus. In terms of biological role, the 26S proteasome is involved in the ATP-dependent degradation of ubiquitinated proteins. The regulatory (or ATPase) complex confers ATP dependency and substrate specificity to the 26S complex. In Helianthus annuus (Common sunflower), this protein is 26S proteasome regulatory subunit 6B homolog.